The following is a 125-amino-acid chain: uncharacterized protein (125 aa).

It is found in the plastid. This is an uncharacterized protein from Euglena longa (Euglenophycean alga).